The chain runs to 490 residues: One cut domain family member 3 (490 aa).

3 disordered regions span residues 130–155 (GAHG…QRLA), 193–213 (LSPL…PPPP), and 287–316 (HGPH…AAAE). Pro residues predominate over residues 143-152 (ATAPPPPPPQ). The span at 290–311 (HSGGGGPGGGGGAGGGSGGPGA) shows a compositional bias: gly residues. The segment at residues 309–395 (PGAGAAAEEI…QRMSALRLAA (87 aa)) is a DNA-binding region (CUT). A DNA-binding region (homeobox) is located at residues 411-470 (PKKQRLVFTDLQRRTLIAIFKENKRPSKEMQATISQQLGLELNTVSNFFMNARRRCMNRW).

The protein belongs to the CUT homeobox family. Specifically expressed in brain, stomach and gut. Within the gut, expressed only in duodenum and jejunum.

The protein localises to the nucleus. In terms of biological role, transcriptional activator. Binds the consensus DNA sequence 5'-DHWATTGAYTWWD-3' on a variety of gene promoters such as those of HNF3B and TTR. The chain is One cut domain family member 3 (Onecut3) from Mus musculus (Mouse).